We begin with the raw amino-acid sequence, 148 residues long: Receptor activity-modifying protein 3 (148 aa).

Residues 1–23 (METGALRRPQLLPLLLLLCGGCP) form the signal peptide. Topologically, residues 24–113 (RAGGCNETGM…CTVDRVHLED (90 aa)) are extracellular. N-linked (GlcNAc...) asparagine glycans are attached at residues N29, N58, N71, and N103. 2 disulfides stabilise this stretch: C40/C72 and C57/C104. The helical transmembrane segment at 114–138 (PPDEVLIPLIVIPVVLTVAMAGLVV) threads the bilayer. Residues 139–148 (WRSKRTDTLL) lie on the Cytoplasmic side of the membrane.

It belongs to the RAMP family. Heterodimer of CALCRL and RAMP3; interaction induces allosteric modulation of CALCRL function and ligand specificity for adrenomedullin/ADM and intermedin/ADM2. Heterodimer of CALCR and RAMP3; interaction form the receptor complex AMYR3 for amylin/IAPP. Interacts with GPER1. Strongly expressed in lung, breast, immune system and fetal tissues.

The protein resides in the cell membrane. Its subcellular location is the membrane. Functionally, accessory protein that interacts with and modulates the function of G-protein coupled receptors including calcitonin gene-related peptide type 1 receptor (CALCRL), calcitonin receptor (CALCR) and G-protein coupled estrogen receptor 1 (GPER1). Required for the transport of CALCRL and GPER1 receptors to the plasma membrane. Plays a role in cardioprotection by reducing cardiac hypertrophy and perivascular fibrosis in a GPER1-dependent manner. Together with CALCRL, form a receptor complex for adrenomedullin/ADM and intermedin/ADM2. Together with CALCR, act as a receptor complex for amylin/IAPP. This chain is Receptor activity-modifying protein 3, found in Homo sapiens (Human).